The primary structure comprises 436 residues: Trigger factor (436 aa).

The PPIase FKBP-type domain maps to 164-249; the sequence is GDTVVIDFEG…IHEVKTKELP (86 aa).

The protein belongs to the FKBP-type PPIase family. Tig subfamily.

It is found in the cytoplasm. It carries out the reaction [protein]-peptidylproline (omega=180) = [protein]-peptidylproline (omega=0). Functionally, involved in protein export. Acts as a chaperone by maintaining the newly synthesized protein in an open conformation. Functions as a peptidyl-prolyl cis-trans isomerase. This Ligilactobacillus salivarius (strain UCC118) (Lactobacillus salivarius) protein is Trigger factor.